Here is a 374-residue protein sequence, read N- to C-terminus: Flap endonuclease 1 (374 aa).

The N-domain stretch occupies residues 1–105; the sequence is MGVKGLNQLI…GELEKRMIRK (105 aa). Asp-34 contributes to the Mg(2+) binding site. The DNA site is built by Arg-47 and Arg-71. Positions 87, 159, 161, 180, and 182 each coordinate Mg(2+). The I-domain stretch occupies residues 123 to 254; sequence EMVRYEKRSV…VTAFKLIKEH (132 aa). DNA is bound at residue Glu-159. Residues Gly-232 and Asp-234 each contribute to the DNA site. Position 234 (Asp-234) interacts with Mg(2+). The segment at 341–349 is interaction with PCNA; sequence VQGRLDGFF. Over residues 354 to 365 the composition is skewed to basic and acidic residues; it reads TEKRKPEQDKKT. The segment at 354–374 is disordered; sequence TEKRKPEQDKKTKGSKKAKKK.

The protein belongs to the XPG/RAD2 endonuclease family. FEN1 subfamily. In terms of assembly, interacts with PCNA. Three molecules of FEN1 bind to one PCNA trimer with each molecule binding to one PCNA monomer. PCNA stimulates the nuclease activity without altering cleavage specificity. Requires Mg(2+) as cofactor. Post-translationally, phosphorylated. Phosphorylation upon DNA damage induces relocalization to the nuclear plasma.

It is found in the nucleus. The protein localises to the nucleolus. The protein resides in the nucleoplasm. It localises to the mitochondrion. Structure-specific nuclease with 5'-flap endonuclease and 5'-3' exonuclease activities involved in DNA replication and repair. During DNA replication, cleaves the 5'-overhanging flap structure that is generated by displacement synthesis when DNA polymerase encounters the 5'-end of a downstream Okazaki fragment. It enters the flap from the 5'-end and then tracks to cleave the flap base, leaving a nick for ligation. Also involved in the long patch base excision repair (LP-BER) pathway, by cleaving within the apurinic/apyrimidinic (AP) site-terminated flap. Acts as a genome stabilization factor that prevents flaps from equilibrating into structures that lead to duplications and deletions. Also possesses 5'-3' exonuclease activity on nicked or gapped double-stranded DNA, and exhibits RNase H activity. Also involved in replication and repair of rDNA and in repairing mitochondrial DNA. The protein is Flap endonuclease 1 of Meyerozyma guilliermondii (strain ATCC 6260 / CBS 566 / DSM 6381 / JCM 1539 / NBRC 10279 / NRRL Y-324) (Yeast).